A 622-amino-acid chain; its full sequence is Low affinity potassium transport system protein Kup (622 aa).

A run of 12 helical transmembrane segments spans residues 9-29, 49-69, 103-123, 137-157, 165-185, 213-233, 247-267, 276-296, 337-357, 363-383, 396-416, and 419-439; these read LPAITLAAIGVVYGDIGTSPL, VFGFLSLIFWLLIFVVSIKYL, VIMGLIGGSFFYGEVVITPAI, PQLDTWIVPLSIIVLTLLFMI, VGKLFAPIMLTWFLILAGLGL, VSFIALGAVVLSITGVEALYA, WFTVVLPSLTLNYFGQGALLL, PFFLLAPDWALIPLLIIAALA, IYIPFVNWMLYVAVVIVIVSF, LAAAYGIAVTGTMVLTSILST, FVALILIAFLCVDIPLFTANL, and LLSGGWLPLSLGTVMFIVMTT.

This sequence belongs to the HAK/KUP transporter (TC 2.A.72) family.

The protein resides in the cell inner membrane. It carries out the reaction K(+)(in) + H(+)(in) = K(+)(out) + H(+)(out). Its function is as follows. Responsible for the low-affinity transport of potassium into the cell. Likely operates as a K(+):H(+) symporter. The polypeptide is Low affinity potassium transport system protein Kup (Escherichia coli O157:H7).